Reading from the N-terminus, the 368-residue chain is uncharacterized protein (368 aa).

The interval 237-287 (ESLSIPSRRRPSSIAPIGTRPSRKEIAFSNSSTPTDQTLRPPNPPAANGNA) is disordered. Residues 238-253 (SLSIPSRRRPSSIAPI) are compositionally biased toward low complexity. A compositionally biased stretch (polar residues) spans 264-276 (FSNSSTPTDQTLR).

This is an uncharacterized protein from Schizosaccharomyces pombe (strain 972 / ATCC 24843) (Fission yeast).